Consider the following 164-residue polypeptide: UPF0114 protein BCI_0033 (164 aa).

A run of 3 helical transmembrane segments spans residues leucine 15–phenylalanine 35, leucine 53–valine 73, and isoleucine 136–isoleucine 156.

It belongs to the UPF0114 family.

The protein resides in the cell membrane. This chain is UPF0114 protein BCI_0033, found in Baumannia cicadellinicola subsp. Homalodisca coagulata.